The chain runs to 226 residues: ATP synthase F(0) complex subunit a (226 aa).

6 helical membrane-spanning segments follow: residues 6-26, 68-88, 97-117, 138-158, 164-184, and 193-213; these read FATF…IMLF, WALM…LGLL, QLSM…LMGF, VPML…ALAV, ITAG…LCSI, and FIIL…QAYV.

Belongs to the ATPase A chain family. Component of the ATP synthase complex composed at least of ATP5F1A/subunit alpha, ATP5F1B/subunit beta, ATP5MC1/subunit c (homooctomer), MT-ATP6/subunit a, MT-ATP8/subunit 8, ATP5ME/subunit e, ATP5MF/subunit f, ATP5MG/subunit g, ATP5MK/subunit k, ATP5MJ/subunit j, ATP5F1C/subunit gamma, ATP5F1D/subunit delta, ATP5F1E/subunit epsilon, ATP5PF/subunit F6, ATP5PB/subunit b, ATP5PD/subunit d, ATP5PO/subunit OSCP. ATP synthase complex consists of a soluble F(1) head domain (subunits alpha(3) and beta(3)) - the catalytic core - and a membrane F(0) domain - the membrane proton channel (subunits c, a, 8, e, f, g, k and j). These two domains are linked by a central stalk (subunits gamma, delta, and epsilon) rotating inside the F1 region and a stationary peripheral stalk (subunits F6, b, d, and OSCP). Interacts with DNAJC30; interaction is direct.

It localises to the mitochondrion inner membrane. It catalyses the reaction H(+)(in) = H(+)(out). Functionally, subunit a, of the mitochondrial membrane ATP synthase complex (F(1)F(0) ATP synthase or Complex V) that produces ATP from ADP in the presence of a proton gradient across the membrane which is generated by electron transport complexes of the respiratory chain. ATP synthase complex consist of a soluble F(1) head domain - the catalytic core - and a membrane F(1) domain - the membrane proton channel. These two domains are linked by a central stalk rotating inside the F(1) region and a stationary peripheral stalk. During catalysis, ATP synthesis in the catalytic domain of F(1) is coupled via a rotary mechanism of the central stalk subunits to proton translocation. With the subunit c (ATP5MC1), forms the proton-conducting channel in the F(0) domain, that contains two crucial half-channels (inlet and outlet) that facilitate proton movement from the mitochondrial intermembrane space (IMS) into the matrix. Protons are taken up via the inlet half-channel and released through the outlet half-channel, following a Grotthuss mechanism. The chain is ATP synthase F(0) complex subunit a from Osphranter robustus (Wallaroo).